Here is a 662-residue protein sequence, read N- to C-terminus: Translation factor GUF1, mitochondrial (662 aa).

Residues 1–28 (MYIHSSRTVLARYGSRTPLLRPSVLGRY) constitute a mitochondrion transit peptide. Residues 62-244 (ENYRNFSIVA…AIVDHIPAPD (183 aa)) enclose the tr-type G domain. Residues 71–78 (AHVDHGKS), 137–141 (DTPGH), and 191–194 (NKID) contribute to the GTP site.

It belongs to the TRAFAC class translation factor GTPase superfamily. Classic translation factor GTPase family. LepA subfamily.

Its subcellular location is the mitochondrion inner membrane. It carries out the reaction GTP + H2O = GDP + phosphate + H(+). Its function is as follows. Promotes mitochondrial protein synthesis. May act as a fidelity factor of the translation reaction, by catalyzing a one-codon backward translocation of tRNAs on improperly translocated ribosomes. Binds to mitochondrial ribosomes in a GTP-dependent manner. The polypeptide is Translation factor GUF1, mitochondrial (Meyerozyma guilliermondii (strain ATCC 6260 / CBS 566 / DSM 6381 / JCM 1539 / NBRC 10279 / NRRL Y-324) (Yeast)).